Consider the following 178-residue polypeptide: ATP-dependent protease subunit HslV (178 aa).

Thr5 is a catalytic residue. Na(+)-binding residues include Ala160, Cys163, and Thr166.

Belongs to the peptidase T1B family. HslV subfamily. In terms of assembly, a double ring-shaped homohexamer of HslV is capped on each side by a ring-shaped HslU homohexamer. The assembly of the HslU/HslV complex is dependent on binding of ATP.

The protein localises to the cytoplasm. It catalyses the reaction ATP-dependent cleavage of peptide bonds with broad specificity.. With respect to regulation, allosterically activated by HslU binding. Its function is as follows. Protease subunit of a proteasome-like degradation complex believed to be a general protein degrading machinery. The chain is ATP-dependent protease subunit HslV from Magnetococcus marinus (strain ATCC BAA-1437 / JCM 17883 / MC-1).